A 240-amino-acid polypeptide reads, in one-letter code: MINIGLSGSTGKMGRAIAERIDEFENCKISAKFSSTNSLYDLDNFCKHSDVFIDFSTPEILETLVNYALKHNTKLVIGTTGLQPKHFKLLEKAAQTLPILYSANMSIGANLLSYLAKEAIKILDDYDVEILDIHHRNKKDSPSGTAIMLAETIANGKDLDIIFNRGNRPRKKEEIGISSLRGGNVHSIHEISFLDDNEIITLKHEALNNNSFANGAIKAAIWLQDKPSALYSMQDIYKIY.

NAD(+) is bound by residues G8–M13, G78–T80, and S102–M105. H134 acts as the Proton donor/acceptor in catalysis. Residue H135 coordinates (S)-2,3,4,5-tetrahydrodipicolinate. K138 acts as the Proton donor in catalysis. G144–T145 is a (S)-2,3,4,5-tetrahydrodipicolinate binding site.

It belongs to the DapB family.

It localises to the cytoplasm. It carries out the reaction (S)-2,3,4,5-tetrahydrodipicolinate + NAD(+) + H2O = (2S,4S)-4-hydroxy-2,3,4,5-tetrahydrodipicolinate + NADH + H(+). It catalyses the reaction (S)-2,3,4,5-tetrahydrodipicolinate + NADP(+) + H2O = (2S,4S)-4-hydroxy-2,3,4,5-tetrahydrodipicolinate + NADPH + H(+). The protein operates within amino-acid biosynthesis; L-lysine biosynthesis via DAP pathway; (S)-tetrahydrodipicolinate from L-aspartate: step 4/4. Functionally, catalyzes the conversion of 4-hydroxy-tetrahydrodipicolinate (HTPA) to tetrahydrodipicolinate. The protein is 4-hydroxy-tetrahydrodipicolinate reductase of Rickettsia canadensis (strain McKiel).